Reading from the N-terminus, the 842-residue chain is Probable vinculin (842 aa).

A coiled-coil region spans residues K585 to A679.

It belongs to the vinculin/alpha-catenin family. In terms of assembly, monomer. Associates with F-actin. Interacts with aarA, ctxA, ctxB and rgaA. In terms of tissue distribution, epithelium.

It localises to the cytoplasm. The protein localises to the cell cortex. It is found in the cell junction. Involved in cell adhesion. Thought to play an important role in cytokinesis B, probably by providing substrate adhesion and traction forces. Required to organize and polarize the tip epithelium during cytokinesis. Required for the normal distribution of myosin in the tip epithelium. Involved in the localization of ctxA, ctxB, dcsA, exoc6 and rgaA. Thought to form a complex with ctxA, ctxB, and rgaA which regulates myosin accumulation to the apical plasma membrane. The polypeptide is Probable vinculin (ctnnA) (Dictyostelium discoideum (Social amoeba)).